The chain runs to 760 residues: MEHTYQYLWIISFVTLPVPMLIGMGLLLFPVSTKKLHRIWAFPSVLLLSIVMVFSIDLFIQQINSSSIYQYVWSWTINNDFSLEFGYLIDPLTSILLILITTVGILVLVYSDSYMSHDQGYLRFFVYMSFFNTSMLGLVTSSNLIQIYIFWELVGMCSYLLIGFWFTRPIVSNACQKAFVTNRVGDFGLLLGILGLYWITGSFEFQDLFEIFNNLIYNNDNEVHFLFVTLCAFLLFSGAIAKSAQFPLHVWLPDAMEGPTPISALIHAATMVAAGIFLVARLLPLFVVIPYIMKLIALIGIITVLLGATLAFAQKDIKRGLAYSTMSQLGYTMLALGMGSYRAALFHLITHAYSKALLFLGSGSIIHSMEVIVGYSPDKSQNMVLMGGLTKHVPITKIAFLLGTLSLCGIPPLACFWSKDEILNDSWSYSPIFAIIAFSTAGLTAFYMFRVYLLTFEGHLNIYFQNYSGKKNSAFYSISLWGKQGSKILKKKMRLLPLLTINNKNNNERASFFCFFWKKIYQTGGTVRKMTCPFITINHFGTKRIFSYPQESDNTILFPMLVLVLFTLFIGAIGIPFNQFNQEEMNFDILSKLLIPSLSLLHQNQNKSVDWYEFVTNSTFSVSIASFGIFIASSLYKPIYSSLQNLKFLNLVAKKGPKRILRDKIINVIYDWSYNRGYIDVFYAISLTEGIRRLAELTSFFDRRVIDGITNGVGFTSFFAGEGIKYVGGGRISFYLLLYLFYVLIFLLISSSIFSSFSSL.

The next 16 helical transmembrane spans lie at 9–29 (WIIS…LLLF), 39–59 (IWAF…IDLF), 89–109 (IDPL…LVLV), 125–145 (FVYM…SNLI), 147–167 (IYIF…FWFT), 185–205 (GDFG…SFEF), 221–241 (NEVH…GAIA), 260–280 (TPIS…FLVA), 282–302 (LLPL…IGII), 329–349 (LGYT…FHLI), 356–376 (ALLF…VGYS), 398–418 (IAFL…CFWS), 429–449 (YSPI…FYMF), 556–576 (ILFP…IGIP), 620–640 (FSVS…KPIY), and 734–754 (FYLL…SSIF).

Belongs to the complex I subunit 5 family. As to quaternary structure, NDH is composed of at least 16 different subunits, 5 of which are encoded in the nucleus.

The protein resides in the plastid. It is found in the chloroplast thylakoid membrane. The enzyme catalyses a plastoquinone + NADH + (n+1) H(+)(in) = a plastoquinol + NAD(+) + n H(+)(out). It carries out the reaction a plastoquinone + NADPH + (n+1) H(+)(in) = a plastoquinol + NADP(+) + n H(+)(out). Its function is as follows. NDH shuttles electrons from NAD(P)H:plastoquinone, via FMN and iron-sulfur (Fe-S) centers, to quinones in the photosynthetic chain and possibly in a chloroplast respiratory chain. The immediate electron acceptor for the enzyme in this species is believed to be plastoquinone. Couples the redox reaction to proton translocation, and thus conserves the redox energy in a proton gradient. The chain is NAD(P)H-quinone oxidoreductase subunit 5, chloroplastic (ndhF) from Populus trichocarpa (Western balsam poplar).